The chain runs to 119 residues: Large ribosomal subunit protein bL20 (119 aa).

Belongs to the bacterial ribosomal protein bL20 family.

In terms of biological role, binds directly to 23S ribosomal RNA and is necessary for the in vitro assembly process of the 50S ribosomal subunit. It is not involved in the protein synthesizing functions of that subunit. This Aromatoleum aromaticum (strain DSM 19018 / LMG 30748 / EbN1) (Azoarcus sp. (strain EbN1)) protein is Large ribosomal subunit protein bL20.